An 813-amino-acid polypeptide reads, in one-letter code: Lon protease (813 aa).

The region spanning 14–207 is the Lon N-terminal domain; sequence LPLLPLRGII…ILTEILAREM (194 aa). Residue 359–366 participates in ATP binding; it reads GPPGVGKT. The Lon proteolytic domain maps to 595–776; it reads ESQVGVATGL…DQVIREALLE (182 aa). Active-site residues include S682 and K725.

Belongs to the peptidase S16 family. As to quaternary structure, homohexamer. Organized in a ring with a central cavity.

It localises to the cytoplasm. The catalysed reaction is Hydrolysis of proteins in presence of ATP.. Functionally, ATP-dependent serine protease that mediates the selective degradation of mutant and abnormal proteins as well as certain short-lived regulatory proteins. Required for cellular homeostasis and for survival from DNA damage and developmental changes induced by stress. Degrades polypeptides processively to yield small peptide fragments that are 5 to 10 amino acids long. Binds to DNA in a double-stranded, site-specific manner. The chain is Lon protease from Heliobacterium modesticaldum (strain ATCC 51547 / Ice1).